We begin with the raw amino-acid sequence, 381 residues long: Protein-glutamate methylesterase/protein-glutamine glutaminase (381 aa).

Positions 8 to 125 (QVLCIDDSAL…RDGMNEYADQ (118 aa)) constitute a Response regulatory domain. At Asp-59 the chain carries 4-aspartylphosphate. Positions 183–375 (FSSTEKLIIV…PHVLARLSAH (193 aa)) constitute a CheB-type methylesterase domain. Catalysis depends on residues Ser-195, His-221, and Asp-317.

This sequence belongs to the CheB family. Phosphorylated by CheA. Phosphorylation of the N-terminal regulatory domain activates the methylesterase activity.

It is found in the cytoplasm. The catalysed reaction is [protein]-L-glutamate 5-O-methyl ester + H2O = L-glutamyl-[protein] + methanol + H(+). It catalyses the reaction L-glutaminyl-[protein] + H2O = L-glutamyl-[protein] + NH4(+). Its function is as follows. Involved in chemotaxis. Part of a chemotaxis signal transduction system that modulates chemotaxis in response to various stimuli. Catalyzes the demethylation of specific methylglutamate residues introduced into the chemoreceptors (methyl-accepting chemotaxis proteins or MCP) by CheR. Also mediates the irreversible deamidation of specific glutamine residues to glutamic acid. The chain is Protein-glutamate methylesterase/protein-glutamine glutaminase from Ralstonia nicotianae (strain ATCC BAA-1114 / GMI1000) (Ralstonia solanacearum).